We begin with the raw amino-acid sequence, 436 residues long: Methylenetetrahydrofolate--tRNA-(uracil-5-)-methyltransferase TrmFO (436 aa).

9–14 (GAGLAG) serves as a coordination point for FAD.

Belongs to the MnmG family. TrmFO subfamily. Requires FAD as cofactor.

The protein resides in the cytoplasm. The enzyme catalyses uridine(54) in tRNA + (6R)-5,10-methylene-5,6,7,8-tetrahydrofolate + NADH + H(+) = 5-methyluridine(54) in tRNA + (6S)-5,6,7,8-tetrahydrofolate + NAD(+). It carries out the reaction uridine(54) in tRNA + (6R)-5,10-methylene-5,6,7,8-tetrahydrofolate + NADPH + H(+) = 5-methyluridine(54) in tRNA + (6S)-5,6,7,8-tetrahydrofolate + NADP(+). Catalyzes the folate-dependent formation of 5-methyl-uridine at position 54 (M-5-U54) in all tRNAs. The polypeptide is Methylenetetrahydrofolate--tRNA-(uracil-5-)-methyltransferase TrmFO (Acetivibrio thermocellus (strain ATCC 27405 / DSM 1237 / JCM 9322 / NBRC 103400 / NCIMB 10682 / NRRL B-4536 / VPI 7372) (Clostridium thermocellum)).